The chain runs to 770 residues: POU domain, class 2, transcription factor 1 (770 aa).

The segment covering 1–26 (MNNPSETNKSSMESEDASTGTQTNGL) has biased composition (polar residues). 4 disordered regions span residues 1–33 (MNNP…KQPV), 68–97 (LNVQ…VQSA), 262–285 (VQTL…EPSD), and 357–385 (LSSD…RRKK). Positions 80–97 (DSQQSSQPSSQPPSVQSA) are enriched in low complexity. A compositionally biased stretch (polar residues) spans 262 to 272 (VQTLPQSQSTP). A phosphothreonine mark is found at Thr271 and Thr277. The 75-residue stretch at 281–355 (EEPSDLEELE…LLEKWLNDAE (75 aa)) folds into the POU-specific domain. Ser284 is modified (phosphoserine). Over residues 357–372 (LSSDSTASSPSALNSP) the composition is skewed to low complexity. The segment at residues 382-441 (RRKKRTSIETNIRVALEKSFMENQKPTSEDITLIAEQLNMEKEVIRVWFCNRRQKEKRIN) is a DNA-binding region (homeobox). Phosphoserine occurs at positions 388 and 451. The span at 519 to 580 (TTTAGTTDST…TNTTQTTSTP (62 aa)) shows a compositional bias: low complexity. The segment at 519–589 (TTTAGTTDST…PLPSPLGASQ (71 aa)) is disordered.

Belongs to the POU transcription factor family. Class-2 subfamily. In terms of assembly, interacts with POU2AF1; the interaction increases POU2F1 transactivation activity. Interacts with NR3C1, AR, PGR and HCFC1. Post-translationally, phosphorylated by PRKDC. In terms of tissue distribution, ubiquitously expressed. However, isoforms 4 and 5 are only expressed in lymphocytes.

The protein localises to the nucleus. Transcription factor that binds to the octamer motif (5'-ATTTGCAT-3') and activates the promoters of the genes for some small nuclear RNAs (snRNA) and of genes such as those for histone H2B and immunoglobulins. Modulates transcription transactivation by NR3C1, AR and PGR. The chain is POU domain, class 2, transcription factor 1 (Pou2f1) from Mus musculus (Mouse).